A 937-amino-acid polypeptide reads, in one-letter code: Coiled-coil domain-containing protein 39 (937 aa).

Coiled-coil stretches lie at residues A16–N137, Q165–I339, E365–R615, and V664–T816. The interval L866 to K937 is disordered. Positions S873–R887 are enriched in low complexity. S888 and S896 each carry phosphoserine. Positions N915–N928 are enriched in low complexity.

It belongs to the CCDC39 family. As to expression, strongly expressed in tissues rich in ciliated cells. Expressed in olfactory and vomeronasal sensory neurons and the respiratory epithelium. Expressed in node cells carrying motile cilia, in upper and lower airways, and in ependymal and choroid plexus cells.

It is found in the cytoplasm. It localises to the cytoskeleton. The protein resides in the cilium axoneme. Its function is as follows. Required for assembly of dynein regulatory complex (DRC) and inner dynein arm (IDA) complexes, which are responsible for ciliary beat regulation, thereby playing a central role in motility in cilia and flagella. Probably acts together with CCDC40 to form a molecular ruler that determines the 96 nanometer (nm) repeat length and arrangements of components in cilia and flagella. Not required for outer dynein arm complexes assembly. The sequence is that of Coiled-coil domain-containing protein 39 from Mus musculus (Mouse).